A 23-amino-acid polypeptide reads, in one-letter code: Hongotoxin-4 (23 aa).

The protein belongs to the short scorpion toxin superfamily. Potassium channel inhibitor family. Alpha-KTx 02 subfamily. Expressed by the venom gland.

It localises to the secreted. Its function is as follows. Potent selective inhibitor of Kv1/KCNA voltage-gated potassium channels. This chain is Hongotoxin-4, found in Centruroides limbatus (Bark scorpion).